We begin with the raw amino-acid sequence, 405 residues long: Elongation factor Tu (405 aa).

One can recognise a tr-type G domain in the interval 10–213 (KEHVNVGTIG…AMDEYIPTPQ (204 aa)). The interval 19–26 (GHVDHGKS) is G1. Residue 19 to 26 (GHVDHGKS) coordinates GTP. Serine 26 is a binding site for Mg(2+). Residues 64 to 68 (GITIN) are G2. The tract at residues 85-88 (DCPG) is G3. GTP contacts are provided by residues 85–89 (DCPGH) and 140–143 (NKCD). The interval 140–143 (NKCD) is G4. The segment at 178–180 (SAL) is G5.

The protein belongs to the TRAFAC class translation factor GTPase superfamily. Classic translation factor GTPase family. EF-Tu/EF-1A subfamily. As to quaternary structure, monomer.

Its subcellular location is the cytoplasm. The catalysed reaction is GTP + H2O = GDP + phosphate + H(+). In terms of biological role, GTP hydrolase that promotes the GTP-dependent binding of aminoacyl-tRNA to the A-site of ribosomes during protein biosynthesis. This is Elongation factor Tu from Aquifex aeolicus (strain VF5).